Consider the following 61-residue polypeptide: Small ribosomal subunit protein uS14B (61 aa).

Positions 24, 27, 40, and 43 each coordinate Zn(2+).

This sequence belongs to the universal ribosomal protein uS14 family. Zinc-binding uS14 subfamily. Part of the 30S ribosomal subunit. Contacts proteins S3 and S10. The cofactor is Zn(2+).

Functionally, binds 16S rRNA, required for the assembly of 30S particles and may also be responsible for determining the conformation of the 16S rRNA at the A site. In Staphylococcus epidermidis (strain ATCC 35984 / DSM 28319 / BCRC 17069 / CCUG 31568 / BM 3577 / RP62A), this protein is Small ribosomal subunit protein uS14B.